Reading from the N-terminus, the 278-residue chain is S-formylglutathione hydrolase YeiG (278 aa).

Active-site charge relay system residues include Ser-145, Asp-223, and His-256.

Belongs to the esterase D family.

It catalyses the reaction S-formylglutathione + H2O = formate + glutathione + H(+). In terms of biological role, serine hydrolase involved in the detoxification of formaldehyde. Hydrolyzes S-formylglutathione to glutathione and formate. In Escherichia coli O139:H28 (strain E24377A / ETEC), this protein is S-formylglutathione hydrolase YeiG (yeiG).